We begin with the raw amino-acid sequence, 147 residues long: Deoxyuridine 5'-triphosphate nucleotidohydrolase (147 aa).

Substrate contacts are provided by residues 63-65 (RSG), Asn-76, and 80-82 (TID).

The protein belongs to the dUTPase family. The cofactor is Mg(2+).

The enzyme catalyses dUTP + H2O = dUMP + diphosphate + H(+). The protein operates within pyrimidine metabolism; dUMP biosynthesis; dUMP from dCTP (dUTP route): step 2/2. Its function is as follows. This enzyme is involved in nucleotide metabolism: it produces dUMP, the immediate precursor of thymidine nucleotides and it decreases the intracellular concentration of dUTP so that uracil cannot be incorporated into DNA. The protein is Deoxyuridine 5'-triphosphate nucleotidohydrolase of Chlamydia caviae (strain ATCC VR-813 / DSM 19441 / 03DC25 / GPIC) (Chlamydophila caviae).